Here is a 222-residue protein sequence, read N- to C-terminus: Vespryn (222 aa).

The N-terminal stretch at 1 to 44 (MSPSAGLQFSLYFLQTKKVLWKLTDKEKGLCYILLFTLCFFADQ) is a signal peptide. Positions 45-52 (ENGGKALA) are excised as a propeptide. A B30.2/SPRY domain is found at 53–159 (SPPGIWKRAD…RIWQMGLWWL (107 aa)). Positions 160–222 (RHLETDPGRV…LGGTVSLTTL (63 aa)) are excised as a propeptide. N-linked (GlcNAc...) asparagine glycosylation occurs at N195.

Belongs to the ohanin/vespryn family. As to expression, expressed by the venom gland.

The protein localises to the secreted. Functionally, neurotoxin that produces dose-dependent hypolocomotion and hyperalgesia in mice. May directly act on the central nervous system, as it is 6500-fold more potent when administered intracerebroventricularly than intraperitoneal. The polypeptide is Vespryn (Crotalus adamanteus (Eastern diamondback rattlesnake)).